A 304-amino-acid chain; its full sequence is Carnitine monooxygenase reductase subunit (304 aa).

The 93-residue stretch at 1 to 93 folds into the FAD-binding FR-type domain; the sequence is MEQLTPLIKR…SEPKNLFPLA (93 aa). One can recognise a 2Fe-2S ferredoxin-type domain in the interval 219–304; sequence FTVVLAKSNQ…AKGKKLVLDL (86 aa). The [2Fe-2S] cluster site is built by Cys253, Cys258, Cys261, and Cys291.

It belongs to the PDR/VanB family. CntB subfamily. As to quaternary structure, composed of an oxygenase subunit and a reductase subunit. The cofactor is FMN. It depends on [2Fe-2S] cluster as a cofactor.

It carries out the reaction (R)-carnitine + NADH + O2 + H(+) = (3R)-3-hydroxy-4-oxobutanoate + trimethylamine + NAD(+) + H2O. The enzyme catalyses (R)-carnitine + NADPH + O2 + H(+) = (3R)-3-hydroxy-4-oxobutanoate + trimethylamine + NADP(+) + H2O. It participates in amine and polyamine metabolism; carnitine metabolism. Its activity is regulated as follows. Inhibited by EDTA. Converts carnitine to trimethylamine and malic semialdehyde. Acts on both enantiomers. In Acinetobacter pittii (strain PHEA-2), this protein is Carnitine monooxygenase reductase subunit.